A 134-amino-acid polypeptide reads, in one-letter code: Transcription antitermination protein NusB (134 aa).

This sequence belongs to the NusB family.

Its function is as follows. Involved in transcription antitermination. Required for transcription of ribosomal RNA (rRNA) genes. Binds specifically to the boxA antiterminator sequence of the ribosomal RNA (rrn) operons. In Shewanella amazonensis (strain ATCC BAA-1098 / SB2B), this protein is Transcription antitermination protein NusB.